The following is a 362-amino-acid chain: Oxygen-dependent coproporphyrinogen-III oxidase (362 aa).

Residues 12–31 (RQENDQSTPQLELPPTDSRD) form a disordered region. A substrate-binding site is contributed by serine 118. Positions 122 and 132 each coordinate a divalent metal cation. The active-site Proton donor is histidine 132. Position 134-136 (134-136 (NYR)) interacts with substrate. A divalent metal cation-binding residues include histidine 166 and histidine 196. The tract at residues 286-321 (YVEFNLVWDRGTIFGLQTNGRTESILMSLPPLVRWE) is important for dimerization.

It belongs to the aerobic coproporphyrinogen-III oxidase family. As to quaternary structure, homodimer. The cofactor is a divalent metal cation.

Its subcellular location is the cytoplasm. The catalysed reaction is coproporphyrinogen III + O2 + 2 H(+) = protoporphyrinogen IX + 2 CO2 + 2 H2O. It participates in porphyrin-containing compound metabolism; protoporphyrin-IX biosynthesis; protoporphyrinogen-IX from coproporphyrinogen-III (O2 route): step 1/1. Functionally, involved in the heme and chlorophyll biosynthesis. Catalyzes the aerobic oxidative decarboxylation of propionate groups of rings A and B of coproporphyrinogen-III to yield the vinyl groups in protoporphyrinogen-IX. The sequence is that of Oxygen-dependent coproporphyrinogen-III oxidase from Synechococcus sp. (strain CC9902).